The following is a 708-amino-acid chain: Protein psiF (708 aa).

The signal sequence occupies residues methionine 1–alanine 19. The Extracellular portion of the chain corresponds to aspartate 20–glycine 643. Residues asparagine 78, asparagine 116, asparagine 222, asparagine 317, asparagine 318, asparagine 371, asparagine 498, and asparagine 600 are each glycosylated (N-linked (GlcNAc...) asparagine). The region spanning threonine 103–lysine 263 is the PA14 domain. Residues isoleucine 644–isoleucine 664 traverse the membrane as a helical segment. The Cytoplasmic segment spans residues phenylalanine 665–glutamate 708. Polar residues predominate over residues methionine 682–leucine 702. The tract at residues methionine 682–glutamate 708 is disordered.

It belongs to the prespore-cell-inducing factor family. In terms of assembly, forms a complex with dicB.

The protein localises to the membrane. It is found in the secreted. Acts as a quorum sensing protein regulating discoidin gene expression during growth and development. D.discoideum is a single-celled amoebae and switches to multicellular development when food becomes limited. As the growing cells reach a high density, they begin expressing discoidin genes. The ability of psiF/dicA to induce discoidin gene expression when present in conditioned medium, suggests that it allows cells to sense their local density. This Dictyostelium discoideum (Social amoeba) protein is Protein psiF (psiF).